The primary structure comprises 204 residues: Bcl-2-like protein 10 (204 aa).

The BH1 motif lies at 86–105 (LSDSPGPTWGRVVTLVTFAG). Residues 118–133 (WKKWGFQPRLKEQEGD) form a required for Ca(2+) binding region. Residues K119, K120, and K128 each participate in a glycyl lysine isopeptide (Lys-Gly) (interchain with G-Cter in ubiquitin) cross-link. The short motif at 156–167 (WLQAQGGWDGFC) is the BH2 element. A helical transmembrane segment spans residues 183–200 (LVQAFLSCLLTTAFIYLW).

Belongs to the Bcl-2 family. Interacts with BAX. Interacts with BCL2 and BCL2L1/BCLX. Interacts with APAF1. Interacts with ITPR1, ITPR2 and ITPR3; the interaction with ITPR1 is increased in the presence of AHCLY1. Interacts with AHCYL1. Interacts with HIP1R (via ENTH and I/LWEQ domains). Interacts with CASP9. Interacts with BCL2L11/BIM. Interacts with BIK. Interacts with UBQLN4. Interacts with NME2/NM23-H2. Interacts with PMAIP1/NOXA. Interacts with TPX2. Interacts with UBQLN1; in the cytoplasm. Interacts (via BH1 domain) with BECN1. Requires Ca(2+) as cofactor. In terms of processing, monoubiquitinated by UBQLN1; results in stabilization of BCL2L10 protein abundance and in relocalization from mitochondria to cytoplasm. As to expression, widely expressed in adult tissues. Preferentially expressed in lung, liver and kidney.

It is found in the mitochondrion. It localises to the nucleus membrane. The protein localises to the endoplasmic reticulum. The protein resides in the cytoplasm. Its subcellular location is the cytoskeleton. It is found in the spindle. Promotes cell survival by suppressing apoptosis induced by BAX but not BAK. Increases binding of AHCYL1/IRBIT to ITPR1. Reduces ITPR1-mediated calcium release from the endoplasmic reticulum cooperatively with AHCYL1/IRBIT under normal cellular conditions. Under apoptotic stress conditions, dissociates from ITPR1 and is displaced from mitochondria-associated endoplasmic reticulum membranes, leading to increased Ca(2+) transfer to mitochondria which promotes apoptosis. Required for the correct formation of the microtubule organizing center during oocyte cell division, potentially via regulation of protein abundance and localization of other microtubule organizing center components such as AURKA and TPX2. The sequence is that of Bcl-2-like protein 10 from Homo sapiens (Human).